A 443-amino-acid polypeptide reads, in one-letter code: Probable D-serine dehydratase (443 aa).

Position 118 is an N6-(pyridoxal phosphate)lysine (Lys-118).

This sequence belongs to the serine/threonine dehydratase family. DsdA subfamily. It depends on pyridoxal 5'-phosphate as a cofactor.

It catalyses the reaction D-serine = pyruvate + NH4(+). This chain is Probable D-serine dehydratase, found in Aeromonas hydrophila subsp. hydrophila (strain ATCC 7966 / DSM 30187 / BCRC 13018 / CCUG 14551 / JCM 1027 / KCTC 2358 / NCIMB 9240 / NCTC 8049).